A 695-amino-acid chain; its full sequence is Polyribonucleotide nucleotidyltransferase (695 aa).

2 residues coordinate Mg(2+): Asp-486 and Asp-492. The KH domain maps to 553-612; the sequence is PRIETMQINTSKIATVIGPGGKQIRQIIERSGAQVDINDDGVINIAASTQESINKAKELI. The S1 motif domain occupies 622 to 690; it reads GKVYNGRVTS…EKGQLKLSHK (69 aa).

It belongs to the polyribonucleotide nucleotidyltransferase family. It depends on Mg(2+) as a cofactor.

It localises to the cytoplasm. It carries out the reaction RNA(n+1) + phosphate = RNA(n) + a ribonucleoside 5'-diphosphate. Its function is as follows. Involved in mRNA degradation. Catalyzes the phosphorolysis of single-stranded polyribonucleotides processively in the 3'- to 5'-direction. This chain is Polyribonucleotide nucleotidyltransferase, found in Chlamydia trachomatis serovar D (strain ATCC VR-885 / DSM 19411 / UW-3/Cx).